A 265-amino-acid polypeptide reads, in one-letter code: Basic leucine zipper 6 (265 aa).

Disordered stretches follow at residues 1–24 (MAQLPPKIPVAAPGHHQHWASAGG) and 77–139 (LMSM…RDPK). The segment covering 85–97 (GGSSAPGSDNGGS) has biased composition (low complexity). Residues 122-132 (TQEQAAATSPT) show a composition bias toward polar residues. A bZIP domain is found at 137–189 (DPKRVKRILANRQSAQRSRVRKLQYISELERSVTTLQNEVSVLSPRVAFLDQQ). Residues 139-158 (KRVKRILANRQSAQRSRVRK) form a basic motif region. Positions 165–186 (LERSVTTLQNEVSVLSPRVAFL) are leucine-zipper. A disordered region spans residues 239-265 (LSGGLAADHAHVHGGPPPVRAEKELMS).

In terms of tissue distribution, expressed in roots, shoots and panicles.

It localises to the nucleus. In terms of biological role, transcription regulator. The sequence is that of Basic leucine zipper 6 (BZIP06) from Oryza sativa subsp. japonica (Rice).